The chain runs to 372 residues: Proline-rich P65 protein homolog (372 aa).

Residues 1 to 37 are compositionally biased toward low complexity; it reads MEKNRSAFQQNQQASNQPFNQDQNQYYQDPNQQQFNQ. The segment at 1-100 is disordered; that stretch reads MEKNRSAFQQ…GFDPNQQYYQ (100 aa). Tandem repeats lie at residues 29–40, 41–52, 53–60, 61–72, 73–80, 81–92, 93–100, 101–112, 113–119, 120–131, 132–138, 139–150, and 151–162. The segment covering 38 to 49 has biased composition (polar residues); it reads SGFDPNQQQFNQ. A compositionally biased stretch (low complexity) spans 53–100; it reads DPNQQYYQDPNQQQFNQAGFDQNQQYYQDPNQQQFNQPGFDPNQQYYQ. The interval 122–150 is disordered; the sequence is NQQQFNQSGFDQNQYYQDPNQQQFNQPSF.

The polypeptide is Proline-rich P65 protein homolog (Mycoplasma genitalium (strain ATCC 33530 / DSM 19775 / NCTC 10195 / G37) (Mycoplasmoides genitalium)).